The primary structure comprises 162 residues: Phosphopantetheine adenylyltransferase (162 aa).

Ser-11 contributes to the substrate binding site. Residues 11–12 (SF) and His-19 each bind ATP. Residues Lys-43, Thr-75, and Arg-89 each contribute to the substrate site. ATP-binding positions include 90–92 (GLR), Glu-100, and 125–131 (YAFLSSS).

The protein belongs to the bacterial CoaD family. In terms of assembly, homohexamer. Mg(2+) serves as cofactor.

The protein localises to the cytoplasm. It carries out the reaction (R)-4'-phosphopantetheine + ATP + H(+) = 3'-dephospho-CoA + diphosphate. It participates in cofactor biosynthesis; coenzyme A biosynthesis; CoA from (R)-pantothenate: step 4/5. Reversibly transfers an adenylyl group from ATP to 4'-phosphopantetheine, yielding dephospho-CoA (dPCoA) and pyrophosphate. This Finegoldia magna (strain ATCC 29328 / DSM 20472 / WAL 2508) (Peptostreptococcus magnus) protein is Phosphopantetheine adenylyltransferase.